Consider the following 435-residue polypeptide: Methylenetetrahydrofolate--tRNA-(uracil-5-)-methyltransferase TrmFO (435 aa).

9–14 serves as a coordination point for FAD; it reads GAGLAG.

It belongs to the MnmG family. TrmFO subfamily. The cofactor is FAD.

The protein resides in the cytoplasm. The enzyme catalyses uridine(54) in tRNA + (6R)-5,10-methylene-5,6,7,8-tetrahydrofolate + NADH + H(+) = 5-methyluridine(54) in tRNA + (6S)-5,6,7,8-tetrahydrofolate + NAD(+). The catalysed reaction is uridine(54) in tRNA + (6R)-5,10-methylene-5,6,7,8-tetrahydrofolate + NADPH + H(+) = 5-methyluridine(54) in tRNA + (6S)-5,6,7,8-tetrahydrofolate + NADP(+). Catalyzes the folate-dependent formation of 5-methyl-uridine at position 54 (M-5-U54) in all tRNAs. The polypeptide is Methylenetetrahydrofolate--tRNA-(uracil-5-)-methyltransferase TrmFO (Staphylococcus epidermidis (strain ATCC 35984 / DSM 28319 / BCRC 17069 / CCUG 31568 / BM 3577 / RP62A)).